The following is a 501-amino-acid chain: MVQCRPPQEFSFGPRALKDALISCDLALKQLYTSAFSPSERLFLSEAYNPHRTLFSTLLIHSAFDWLLSRPEAPEDFETFHASLQLRKQSLARKHIYLQPIDLSEGLAGCPLLDHLRSCAEAFFLGLRVKCLPSVASASINCCSRPARDTDGLQLHTDGILSFLKNNKPGDALCVLGLTLADLYPHDAWTFTFGRFLPGHEVGVCSFARFSGEFLQAGSSIPDSALLEAAAGGPETLPQEGGQTLCYSALGMVQCCKVTCHELCHLLGLGSCRWLRCLLQGVLSLDEALRRPLDLCPICLRKLHHLLGFRLLERYKRLHTWTRVMLEMWSGQEAGEPSVSEDTLPFSADSGMGCESDTEPVTSPSEPVTPDAWSHTFPDGPEPVSEEGLSSLAASEVLLKLGGPVDALEEYRQWLDACIQALEREVAEEELVQVDAAVDALGRWEMFTGQLPVTKQYMPCVKDNVGLRRVLGDKFSSLRRRLSSRRLAKASSSQCHWGAEN.

Position 261 (His-261) interacts with Zn(2+). The active-site Proton acceptor is the Glu-262. His-265, Cys-272, Cys-277, Cys-296, and Cys-299 together coordinate Zn(2+). The interval 349-370 is disordered; it reads DSGMGCESDTEPVTSPSEPVTP.

It belongs to the peptidase M54 family. It depends on Zn(2+) as a cofactor.

Functionally, probable zinc metalloprotease. The chain is Archaemetzincin-1 (Amz1) from Rattus norvegicus (Rat).